The primary structure comprises 500 residues: Pentatricopeptide repeat-containing protein At1g05750, chloroplastic (500 aa).

A chloroplast-targeting transit peptide spans 1-54; that stretch reads MGLLPVVGITSPALITHKNHANPKIQRHNQSTSETTVSWTSRINLLTRNGRLAE. PPR repeat units follow at residues 35–69, 70–106, 108–138, 139–173, 174–204, 205–239, 240–270, 271–305, 306–336, and 342–376; these read TTVS…GVEP, NHIT…GLDR, HVMV…MEDK, NSVT…DLIS, WTAM…GVKP, DYVA…DFKN, NVRV…MEKR, TVVS…GFKP, DAVT…MKCD, and RIEH…PNEV. A type E motif region spans residues 377–453; sequence VIGSLLAACS…QPGFSSIEID (77 aa). The segment at 454-484 is type E(+) motif; it reads DCMHVFMAGDNAHVETTYIREVLELISSDLR.

This sequence belongs to the PPR family. PCMP-E subfamily.

The protein localises to the plastid. It is found in the chloroplast. The sequence is that of Pentatricopeptide repeat-containing protein At1g05750, chloroplastic (PDE247) from Arabidopsis thaliana (Mouse-ear cress).